Here is a 158-residue protein sequence, read N- to C-terminus: Transcription elongation factor GreA (158 aa).

Positions 47–74 (AEYHAAKEEQSHNEGRIAELEDKLARAD) form a coiled coil.

This sequence belongs to the GreA/GreB family.

Functionally, necessary for efficient RNA polymerase transcription elongation past template-encoded arresting sites. The arresting sites in DNA have the property of trapping a certain fraction of elongating RNA polymerases that pass through, resulting in locked ternary complexes. Cleavage of the nascent transcript by cleavage factors such as GreA or GreB allows the resumption of elongation from the new 3'terminus. GreA releases sequences of 2 to 3 nucleotides. The protein is Transcription elongation factor GreA of Bradyrhizobium sp. (strain BTAi1 / ATCC BAA-1182).